Reading from the N-terminus, the 414-residue chain is Hydroxysqualene dehydroxylase (414 aa).

It belongs to the HpnE family.

It carries out the reaction squalene + FAD + H2O + H(+) = hydroxysqualene + FADH2. The protein operates within secondary metabolite biosynthesis; hopanoid biosynthesis. In terms of biological role, involved in the biosynthesis of the hopanoid precursor squalene (SQ) from farnesyl diphosphate (FPP). Catalyzes the third (last) step, the reduction of hydroxysqualene (HSQ) to SQ. The polypeptide is Hydroxysqualene dehydroxylase (Zymomonas mobilis subsp. mobilis (strain ATCC 31821 / ZM4 / CP4)).